The chain runs to 207 residues: Small ribosomal subunit protein uS4 (207 aa).

Positions 31-51 are disordered; that stretch reads KCKLDSKPGQHGRTSGARTSD. The region spanning 97–160 is the S4 RNA-binding domain; that stretch reads SRLDNVVYRM…KKQARIRESL (64 aa).

The protein belongs to the universal ribosomal protein uS4 family. In terms of assembly, part of the 30S ribosomal subunit. Contacts protein S5. The interaction surface between S4 and S5 is involved in control of translational fidelity.

Its function is as follows. One of the primary rRNA binding proteins, it binds directly to 16S rRNA where it nucleates assembly of the body of the 30S subunit. With S5 and S12 plays an important role in translational accuracy. The polypeptide is Small ribosomal subunit protein uS4 (Bordetella avium (strain 197N)).